A 217-amino-acid chain; its full sequence is GrpE protein homolog 1, mitochondrial (217 aa).

The N-terminal 27 residues, 1-27 (MAARCVRLARGSLPAFALSLRSSPRLL), are a transit peptide targeting the mitochondrion. Lys-94 is modified (N6-acetyllysine; alternate). N6-succinyllysine; alternate is present on Lys-94. An N6-acetyllysine modification is found at Lys-100. Position 120 is an N6-succinyllysine (Lys-120). At Lys-215 the chain carries N6-acetyllysine; alternate. N6-succinyllysine; alternate is present on Lys-215.

Belongs to the GrpE family. As to quaternary structure, probable component of the PAM complex at least composed of a mitochondrial HSP70 protein, GRPEL1 or GRPEL2, TIMM44, TIMM16/PAM16 and TIMM14/DNAJC19. Binds to HSP70, HSC70 and HSJ1B.

Its subcellular location is the mitochondrion matrix. Essential component of the PAM complex, a complex required for the translocation of transit peptide-containing proteins from the inner membrane into the mitochondrial matrix in an ATP-dependent manner. Seems to control the nucleotide-dependent binding of mitochondrial HSP70 to substrate proteins. This Bos taurus (Bovine) protein is GrpE protein homolog 1, mitochondrial (GRPEL1).